The primary structure comprises 220 residues: Adapter protein MecA (220 aa).

Belongs to the MecA family. As to quaternary structure, homodimer.

In terms of biological role, enables the recognition and targeting of unfolded and aggregated proteins to the ClpC protease or to other proteins involved in proteolysis. This is Adapter protein MecA from Enterococcus faecalis (strain ATCC 700802 / V583).